A 577-amino-acid chain; its full sequence is Moesin (577 aa).

One can recognise an FERM domain in the interval 2 to 295 (PKTISVRVTT…GNHELYMRRR (294 aa)). The residue at position 74 (Ser74) is a Phosphoserine. Lys79 carries the post-translational modification N6-acetyllysine. The residue at position 83 (Lys83) is an N6-succinyllysine. The [IL]-x-C-x-x-[DE] motif signature appears at 115-120 (IYCPPE). Tyr116 bears the Phosphotyrosine mark. Cys117 carries the S-nitrosocysteine modification. An N6-acetyllysine mark is found at Lys139 and Lys165. Disordered stretches follow at residues 322–342 (LLEN…KIER), 358–419 (TKKA…QLAS), and 468–518 (STPH…NERV). A compositionally biased stretch (basic and acidic residues) spans 358 to 401 (TKKAQQELEEQTRRALELEQERKRAQSEAEKLAKERQEAEEAKE). Ser407 bears the Phosphoserine mark. Basic and acidic residues predominate over residues 492–518 (AELRADAMAKDRSEEERTTEAEKNERV). At Ser527 the chain carries Phosphoserine. The residue at position 558 (Thr558) is a Phosphothreonine; by ROCK2 and STK10.

In terms of assembly, in resting T-cells, part of a PAG1-NHERF1-MSN complex which is disrupted upon TCR activation. Interacts with NHERF1. Interacts with PPP1R16B. Interacts with SELPLG and SYK; these interactions mediate the activation of SYK by SELPLG. Interacts with PDPN (via cytoplasmic domain); this interaction activates RHOA and promotes epithelial-mesenchymal transition. Interacts with SPN/CD43 cytoplasmic tail. Interacts with CD44. Interacts with ICAM2. Interacts with ICAM3 (via C-terminus). Interacts with PDZD8. Interacts with F-actin. Interacts with CD46. Interacts with PTPN6. In terms of processing, phosphorylation on Thr-558 by STK10 negatively regulates lymphocyte migration and polarization. Phosphorylation on Thr-558 is crucial for the formation of microvilli-like structures. Phosphorylation by ROCK2 suppresses the head-to-tail association of the N-terminal and C-terminal halves resulting in an opened conformation which is capable of actin and membrane-binding. Post-translationally, S-nitrosylation of Cys-117 is induced by interferon-gamma and oxidatively-modified low-densitity lipoprotein (LDL(ox)) implicating the iNOS-S100A8/9 transnitrosylase complex.

It is found in the cell membrane. It localises to the cytoplasm. Its subcellular location is the cytoskeleton. The protein resides in the apical cell membrane. The protein localises to the cell projection. It is found in the microvillus membrane. It localises to the microvillus. Its function is as follows. Ezrin-radixin-moesin (ERM) family protein that connects the actin cytoskeleton to the plasma membrane and thereby regulates the structure and function of specific domains of the cell cortex. Tethers actin filaments by oscillating between a resting and an activated state providing transient interactions between moesin and the actin cytoskeleton. Once phosphorylated on its C-terminal threonine, moesin is activated leading to interaction with F-actin and cytoskeletal rearrangement. These rearrangements regulate many cellular processes, including cell shape determination, membrane transport, and signal transduction. The role of moesin is particularly important in immunity acting on both T and B-cells homeostasis and self-tolerance, regulating lymphocyte egress from lymphoid organs. Modulates phagolysosomal biogenesis in macrophages. Also participates in immunologic synapse formation. This Mus musculus (Mouse) protein is Moesin.